Here is a 345-residue protein sequence, read N- to C-terminus: Cytoskeleton protein RodZ (345 aa).

Residues 1-111 (MNTEASQDQT…LGKKHKKRDG (111 aa)) lie on the Cytoplasmic side of the membrane. The region spanning 19-79 (LRQARESLGL…KLVHLPEDEL (61 aa)) is the HTH cro/C1-type domain. Residues 30 to 49 (QQTVAERLCLKVSTIRDIEE) constitute a DNA-binding region (H-T-H motif). The chain crosses the membrane as a helical; Signal-anchor for type II membrane protein span at residues 112–132 (WLMSFTWLIVLVVLGLTGAWW). Residues 133 to 345 (WQNHQAQQAE…RVARLTVGVE (213 aa)) are Periplasmic-facing. The disordered stretch occupies residues 151 to 260 (SAQLSQNGGQ…LPTADAGVSG (110 aa)). A compositionally biased stretch (polar residues) spans 188 to 225 (PLTNHSGSAITNSATTSSVPKTTSTEPVDTANTNTTMH). Low complexity predominate over residues 229 to 241 (AASAAVSPSQVPQ).

It belongs to the RodZ family.

It is found in the cell inner membrane. Cytoskeletal protein that is involved in cell-shape control through regulation of the length of the long axis. The polypeptide is Cytoskeleton protein RodZ (Yersinia pestis (strain Pestoides F)).